The sequence spans 307 residues: MARANGRSQNLRDKLDGNELDLSLSDLSEVPVRDLVAIPKATALDLSCNKLTTLPDDFCNLSHIVRLDLSKNQIVQLPSEFGRLMNLQHLDLLQNHLMSLPVSFAQLKSLKWLDLKDNPLKPDLAKVAGDCLDEKQCKECAQRVLQYMKSVQSDHEIELQRKLQLDKERKKKLEAKQRVKEEQEREMRKRKKQQQKERKRRDYNAMQEAERALNSNKKAEEEPTENHKRMATPKEKKLAQRQSRLRKIACILLFGLLVVLLVVVACRFTDLKAINMCTSVNAIYKETLSALHSNPVLERFLQDPSSQ.

Residues 1-247 (MARANGRSQN…LAQRQSRLRK (247 aa)) lie on the Cytoplasmic side of the membrane. 5 LRR repeats span residues 10–31 (NLRD…SEVP), 40–61 (KATA…FCNL), 63–84 (HIVR…FGRL), 86–107 (NLQH…FAQL), and 109–131 (SLKW…AGDC). Positions 156 to 222 (EIELQRKLQL…LNSNKKAEEE (67 aa)) form a coiled coil. Positions 170 to 238 (KKKLEAKQRV…RMATPKEKKL (69 aa)) are disordered. Composition is skewed to basic and acidic residues over residues 174–187 (EAKQ…EREM) and 194–238 (QQKE…EKKL). Residues 248 to 268 (IACILLFGLLVVLLVVVACRF) traverse the membrane as a helical segment. Topologically, residues 269 to 307 (TDLKAINMCTSVNAIYKETLSALHSNPVLERFLQDPSSQ) are lumenal.

As to quaternary structure, interacts with SGO1.

It localises to the microsome membrane. The protein localises to the endoplasmic reticulum membrane. Its subcellular location is the nucleus envelope. Its function is as follows. Required for nuclear import of FGF1. The chain is Leucine-rich repeat-containing protein 59 (lrrc59) from Xenopus laevis (African clawed frog).